We begin with the raw amino-acid sequence, 735 residues long: 1,4-alpha-glucan branching enzyme GlgB (735 aa).

Catalysis depends on aspartate 414, which acts as the Nucleophile. The Proton donor role is filled by glutamate 469.

It belongs to the glycosyl hydrolase 13 family. GlgB subfamily. As to quaternary structure, monomer.

The catalysed reaction is Transfers a segment of a (1-&gt;4)-alpha-D-glucan chain to a primary hydroxy group in a similar glucan chain.. The protein operates within glycan biosynthesis; glycogen biosynthesis. In terms of biological role, catalyzes the formation of the alpha-1,6-glucosidic linkages in glycogen by scission of a 1,4-alpha-linked oligosaccharide from growing alpha-1,4-glucan chains and the subsequent attachment of the oligosaccharide to the alpha-1,6 position. This Burkholderia lata (strain ATCC 17760 / DSM 23089 / LMG 22485 / NCIMB 9086 / R18194 / 383) protein is 1,4-alpha-glucan branching enzyme GlgB.